The following is a 569-amino-acid chain: Sulfite reductase [NADPH] hemoprotein beta-component (569 aa).

Cys-433, Cys-439, Cys-478, and Cys-482 together coordinate [4Fe-4S] cluster. A siroheme-binding site is contributed by Cys-482.

This sequence belongs to the nitrite and sulfite reductase 4Fe-4S domain family. As to quaternary structure, alpha(8)-beta(8). The alpha component is a flavoprotein, the beta component is a hemoprotein. The cofactor is siroheme. [4Fe-4S] cluster serves as cofactor.

The enzyme catalyses hydrogen sulfide + 3 NADP(+) + 3 H2O = sulfite + 3 NADPH + 4 H(+). The protein operates within sulfur metabolism; hydrogen sulfide biosynthesis; hydrogen sulfide from sulfite (NADPH route): step 1/1. Its function is as follows. Component of the sulfite reductase complex that catalyzes the 6-electron reduction of sulfite to sulfide. This is one of several activities required for the biosynthesis of L-cysteine from sulfate. This is Sulfite reductase [NADPH] hemoprotein beta-component from Pseudoalteromonas atlantica (strain T6c / ATCC BAA-1087).